Here is a 309-residue protein sequence, read N- to C-terminus: Peptide methionine sulfoxide reductase MsrA/MsrB (309 aa).

The segment at 1 to 153 (MIYLAGGCFW…PNGYCHIDIN (153 aa)) is peptide methionine sulfoxide reductase A. Residue Cys-8 is part of the active site. One can recognise a MsrB domain in the interval 170–293 (ATEIKEKLSA…NSLSITFIPK (124 aa)). The active-site Nucleophile is Cys-282.

The protein in the N-terminal section; belongs to the MsrA Met sulfoxide reductase family. It in the C-terminal section; belongs to the MsrB Met sulfoxide reductase family.

It carries out the reaction L-methionyl-[protein] + [thioredoxin]-disulfide + H2O = L-methionyl-(S)-S-oxide-[protein] + [thioredoxin]-dithiol. It catalyses the reaction [thioredoxin]-disulfide + L-methionine + H2O = L-methionine (S)-S-oxide + [thioredoxin]-dithiol. The enzyme catalyses L-methionyl-[protein] + [thioredoxin]-disulfide + H2O = L-methionyl-(R)-S-oxide-[protein] + [thioredoxin]-dithiol. Its function is as follows. Has an important function as a repair enzyme for proteins that have been inactivated by oxidation. Catalyzes the reversible oxidation-reduction of methionine sulfoxide in proteins to methionine. The chain is Peptide methionine sulfoxide reductase MsrA/MsrB (msrAB) from Streptococcus pyogenes serotype M18 (strain MGAS8232).